Here is a 665-residue protein sequence, read N- to C-terminus: Sodium/glucose cotransporter 1 (665 aa).

Over 1–24 (MDSSTLSPAVTATDAPIPSYERIR) the chain is Extracellular. The helical transmembrane segment at 25–47 (NAADISVIVIYFVVVMAVGLWAM) threads the bilayer. The Cytoplasmic segment spans residues 48 to 66 (FSTNRGTVGGFFLAGRSMV). The chain crosses the membrane as a helical span at residues 67–90 (WWPIGASLFASNIGSGHFVGLAGT). At 91–95 (GAAAG) the chain is on the extracellular side. A helical membrane pass occupies residues 96 to 117 (IAMGGFEWNALVLVVVLGWIFV). Over 118–139 (PIYIKAGVVTMPEYLRKRFGGK) the chain is Cytoplasmic. A helical transmembrane segment spans residues 140 to 169 (RIQIYLSVLSLLLYIFTKISADIFSGAIFI). Residues 170-176 (NLALGLD) lie on the Extracellular side of the membrane. Residues 177–193 (IYLAIFILLAITALYTI) traverse the membrane as a helical segment. Over 194-202 (TGGLAAVIY) the chain is Cytoplasmic. The helical transmembrane segment at 203–221 (TDTLQTAIMLVGSFILTGF) threads the bilayer. Residues 222-275 (AFNEVGGYEAFMDKYMKAIPTKVSNGNFTAKEECYTPRADSFHIFRDPITGDMP) lie on the Extracellular side of the membrane. N248 carries an N-linked (GlcNAc...) asparagine glycan. 5 disulfides stabilise this stretch: C255-C511, C255-C611, C345-C351, C355-C361, and C517-C522. A helical transmembrane segment spans residues 276–295 (WPGLIFGLAILALWYWCTDQ). At 296–309 (VIVQRCLSAKNMSH) the chain is on the cytoplasmic side. Residues 310–331 (VKADCTLCGYLKLLPMFLMVMP) form a helical membrane-spanning segment. Topologically, residues 332 to 375 (GMISRILYTEKIACVLPEECQKYCGTPVGCTNIAYPTLVVELMP) are extracellular. Residues 376 to 406 (NGLRGLMLSVMMASLMSSLTSIFNSASTLFT) form a helical membrane-spanning segment. Over 407–422 (MDIYTKIRKKASEKEL) the chain is Cytoplasmic. The helical transmembrane segment at 423 to 444 (MIAGRLFILVLIGISIAWVPIV) threads the bilayer. Over 445-451 (QSAQSGQ) the chain is Extracellular. A helical transmembrane segment spans residues 452–477 (LFDYIQSITSYLGPPIAAVFLLAIFC). Q457 is a binding site for D-glucose. Over 478 to 481 (KRVN) the chain is Cytoplasmic. A helical transmembrane segment spans residues 482 to 504 (EQGAFWGLILGFLIGISRMITEF). Over 505–525 (AYGTGSCMEPSNCPKIICGVH) the chain is Extracellular. The chain crosses the membrane as a helical span at residues 526 to 547 (YLYFAIILFVISVITILIISFL). The Cytoplasmic portion of the chain corresponds to 548–645 (TKPIPDVHLY…TSEKPLWRTV (98 aa)). At S585 the chain carries Phosphoserine. A Phosphothreonine modification is found at T588. Residues 646-663 (VNINGIILLAVAVFCHAY) traverse the membrane as a helical segment. Residues 664 to 665 (FA) lie on the Extracellular side of the membrane.

This sequence belongs to the sodium:solute symporter (SSF) (TC 2.A.21) family. In terms of processing, N-glycosylation is not necessary for the cotransporter function. Expressed in enterocytes and enteroendocrine cells of small intestine (at protein level). Expressed in S3 segments of renal proximal tubules (at protein level). Expressed in endometrial glandular and epithelial cells (at protein level).

Its subcellular location is the apical cell membrane. The enzyme catalyses D-glucose(out) + 2 Na(+)(out) = D-glucose(in) + 2 Na(+)(in). The catalysed reaction is D-galactose(out) + 2 Na(+)(out) = D-galactose(in) + 2 Na(+)(in). Its activity is regulated as follows. Enhanced by the interaction with PDZK1IP1/MAP17; but unlike SLC5A2/SGLT2, PDZK1IP1 is not essential for SLC5A1 transporter activity. Possibly modulated by cholesterol binding. In terms of biological role, electrogenic Na(+)-coupled sugar symporter that actively transports D-glucose or D-galactose at the plasma membrane, with a Na(+) to sugar coupling ratio of 2:1. Transporter activity is driven by a transmembrane Na(+) electrochemical gradient set by the Na(+)/K(+) pump. Has a primary role in the transport of dietary monosaccharides from enterocytes to blood. Responsible for the absorption of D-glucose or D-galactose across the apical brush-border membrane of enterocytes, whereas basolateral exit is provided by GLUT2. Additionally, functions as a D-glucose sensor in enteroendocrine cells, triggering the secretion of the incretins GCG and GIP that control food intake and energy homeostasis. Together with SGLT2, functions in reabsorption of D-glucose from glomerular filtrate, playing a nonredundant role in the S3 segment of the proximal tubules. Transports D-glucose into endometrial epithelial cells, controlling glycogen synthesis and nutritional support for the embryo as well as the decidual transformation of endometrium prior to conception. Acts as a water channel enabling passive water transport in response to the osmotic gradient created upon sugar and Na(+) uptake. Has high water conductivity comparable to aquaporins and therefore is expected to play an important role in transepithelial water permeability, especially in the small intestine. The chain is Sodium/glucose cotransporter 1 (Slc5a1) from Mus musculus (Mouse).